The sequence spans 308 residues: Sulfate adenylyltransferase subunit 2 (308 aa).

Belongs to the PAPS reductase family. CysD subfamily. In terms of assembly, heterodimer composed of CysD, the smaller subunit, and CysN.

The catalysed reaction is sulfate + ATP + H(+) = adenosine 5'-phosphosulfate + diphosphate. Its pathway is sulfur metabolism; hydrogen sulfide biosynthesis; sulfite from sulfate: step 1/3. Functionally, with CysN forms the ATP sulfurylase (ATPS) that catalyzes the adenylation of sulfate producing adenosine 5'-phosphosulfate (APS) and diphosphate, the first enzymatic step in sulfur assimilation pathway. APS synthesis involves the formation of a high-energy phosphoric-sulfuric acid anhydride bond driven by GTP hydrolysis by CysN coupled to ATP hydrolysis by CysD. The polypeptide is Sulfate adenylyltransferase subunit 2 (Chromobacterium violaceum (strain ATCC 12472 / DSM 30191 / JCM 1249 / CCUG 213 / NBRC 12614 / NCIMB 9131 / NCTC 9757 / MK)).